Reading from the N-terminus, the 314-residue chain is R2-like ligand binding oxidase (314 aa).

Residues E68, E101, and H104 each coordinate Mn(2+). The 3-(O4'-tyrosyl)-valine (Val-Tyr) cross-link spans 71 to 162; that stretch reads VTEDIQPFMS…AAQVRASVTY (92 aa). E101 provides a ligand contact to Fe cation. Fe cation-binding residues include E167, E202, and H205.

This sequence belongs to the ribonucleoside diphosphate reductase small chain family. R2-like ligand binding oxidase subfamily. Homodimer. Fe cation is required as a cofactor. It depends on Mn(2+) as a cofactor.

In terms of biological role, probable oxidase that might be involved in lipid metabolism. This Mycobacterium bovis (strain ATCC BAA-935 / AF2122/97) protein is R2-like ligand binding oxidase.